Reading from the N-terminus, the 545-residue chain is Chaperonin GroEL (545 aa).

Residues 29 to 32, lysine 50, 86 to 90, glycine 414, 477 to 479, and aspartate 493 each bind ATP; these read TMGP, DGTTT, and NAA.

The protein belongs to the chaperonin (HSP60) family. Forms a cylinder of 14 subunits composed of two heptameric rings stacked back-to-back. Interacts with the co-chaperonin GroES.

The protein resides in the cytoplasm. The enzyme catalyses ATP + H2O + a folded polypeptide = ADP + phosphate + an unfolded polypeptide.. Functionally, together with its co-chaperonin GroES, plays an essential role in assisting protein folding. The GroEL-GroES system forms a nano-cage that allows encapsulation of the non-native substrate proteins and provides a physical environment optimized to promote and accelerate protein folding. The polypeptide is Chaperonin GroEL (Campylobacter fetus subsp. fetus (strain 82-40)).